Reading from the N-terminus, the 132-residue chain is Phosphoribosyl-AMP cyclohydrolase (132 aa).

Asp-79 is a binding site for Mg(2+). Cys-80 provides a ligand contact to Zn(2+). Residues Asp-81 and Asp-83 each contribute to the Mg(2+) site. Residues Cys-100 and Cys-107 each contribute to the Zn(2+) site.

Belongs to the PRA-CH family. As to quaternary structure, homodimer. Mg(2+) is required as a cofactor. The cofactor is Zn(2+).

It localises to the cytoplasm. It catalyses the reaction 1-(5-phospho-beta-D-ribosyl)-5'-AMP + H2O = 1-(5-phospho-beta-D-ribosyl)-5-[(5-phospho-beta-D-ribosylamino)methylideneamino]imidazole-4-carboxamide. Its pathway is amino-acid biosynthesis; L-histidine biosynthesis; L-histidine from 5-phospho-alpha-D-ribose 1-diphosphate: step 3/9. Functionally, catalyzes the hydrolysis of the adenine ring of phosphoribosyl-AMP. This is Phosphoribosyl-AMP cyclohydrolase from Acidovorax ebreus (strain TPSY) (Diaphorobacter sp. (strain TPSY)).